Consider the following 241-residue polypeptide: MSILTAENLAKSYKSRKVVSDVSLTVNSNEIVGLLGPNGAGKTTTFYMVVGLVRQDQGKIVIDGEDISLLPMHNRAQRGIGYLPQEASIFRRLTVYENLMAVLEIRKDLTPQQRREKADELIEEFNISHIRDNLGQALSGGERRRVEIARALAANPKFILLDEPFAGVDPISVSDIKKIITDLRNRGLGVLITDHNVRETLDVCERAYIVGAGKIIATGTPEQVMNDEQVKRVYLGEQFKL.

Residues L4–E237 form the ABC transporter domain. G36 to T43 serves as a coordination point for ATP.

It belongs to the ABC transporter superfamily. Outer membrane lipopolysaccharide export (TC 1.B.42) family. Component of the lipopolysaccharide transport and assembly complex. The LptBFG transporter is composed of two ATP-binding proteins (LptB) and two transmembrane proteins (LptF and LptG).

It is found in the cytoplasm. It localises to the cell inner membrane. In terms of biological role, part of the ABC transporter complex LptBFG involved in the translocation of lipopolysaccharide (LPS) from the inner membrane to the outer membrane. Probably responsible for energy coupling to the transport system. The chain is Lipopolysaccharide export system ATP-binding protein LptB (lptB) from Haemophilus influenzae (strain ATCC 51907 / DSM 11121 / KW20 / Rd).